A 367-amino-acid polypeptide reads, in one-letter code: Alanine racemase (367 aa).

Catalysis depends on K40, which acts as the Proton acceptor; specific for D-alanine. K40 bears the N6-(pyridoxal phosphate)lysine mark. R136 is a binding site for substrate. The Proton acceptor; specific for L-alanine role is filled by Y263. M310 contacts substrate.

It belongs to the alanine racemase family. Pyridoxal 5'-phosphate serves as cofactor.

It carries out the reaction L-alanine = D-alanine. It functions in the pathway amino-acid biosynthesis; D-alanine biosynthesis; D-alanine from L-alanine: step 1/1. Catalyzes the interconversion of L-alanine and D-alanine. May also act on other amino acids. This is Alanine racemase (alr) from Streptococcus pneumoniae (strain 70585).